The sequence spans 413 residues: MTSNHLPHHNLTDEDQQEYNKIFKEFIFNIPHNMNPFSPQLDEKKNSHIVEYHWRSPSNTIPSTCNTLYVCFNSPIPVNVIPNNVIILCFLCENKTGFTKGPDFNHPIHPGTIPMSVRYIYFINATYNKPLIAHALPPSAEYLFLSDCYNQAFRAGDLPPNLNILETGDEYNQPFDPLVIPKSLRSLFLGKGYNQPLEFGGLTSLTCLVYDEGSISELPIISLPPNLEFLLLSDAFNHPIEAGMLPPKLKTLTFGDGFNQPLAVGTLPPSLENINFGKVFDQPFLPNVLPHHLKSISFHQFSYFSQTFENIPSHVQTVEFGYTYNKPITSLPSHLKYIKFSEKYNHPIDGVLPQSLTHCYLGKSFKRPLVPGIFPPGLKVLILNGYPKKIPPGTVPANCNFQKNPKQGACSVM.

FNIP repeat units follow at residues 104-148, 149-192, 222-257, 258-301, 304-343, and 344-386; these read FNHP…LSDC, YNQA…LGKG, SLPP…FGDG, FNQP…FHQF, FSQT…FSEK, and YNHP…LNGY.

In terms of assembly, interacts with calmodulin in the presence of Ca(2+).

The protein is Calmodulin-binding protein CmbB of Dictyostelium discoideum (Social amoeba).